Reading from the N-terminus, the 63-residue chain is Large ribosomal subunit protein bL28 (63 aa).

The interval 1 to 21 (MSRRDDLTGKGPMFGNNRSHA) is disordered.

Belongs to the bacterial ribosomal protein bL28 family.

The protein is Large ribosomal subunit protein bL28 of Mycoplasmopsis pulmonis (strain UAB CTIP) (Mycoplasma pulmonis).